A 48-amino-acid polypeptide reads, in one-letter code: Large ribosomal subunit protein bL33B (48 aa).

The protein belongs to the bacterial ribosomal protein bL33 family.

This chain is Large ribosomal subunit protein bL33B (rpmG2), found in Mycoplasma genitalium (strain ATCC 33530 / DSM 19775 / NCTC 10195 / G37) (Mycoplasmoides genitalium).